Reading from the N-terminus, the 256-residue chain is Small ribosomal subunit protein eS1 (256 aa).

Residue Ala2 is modified to N-acetylalanine; partial.

This sequence belongs to the eukaryotic ribosomal protein eS1 family. In terms of assembly, component of the small ribosomal subunit. Mature ribosomes consist of a small (40S) and a large (60S) subunit. The 40S subunit contains about 33 different proteins and 1 molecule of RNA (18S). The 60S subunit contains about 49 different proteins and 3 molecules of RNA (25S, 5.8S and 5S).

The protein localises to the cytoplasm. The chain is Small ribosomal subunit protein eS1 from Laccaria bicolor (strain S238N-H82 / ATCC MYA-4686) (Bicoloured deceiver).